The chain runs to 399 residues: Enoyl-[acyl-carrier-protein] reductase [NADH] (399 aa).

Residues 48–53 (GASTGY), 74–75 (FE), 111–112 (DA), and 139–140 (LA) contribute to the NAD(+) site. Residue tyrosine 225 coordinates substrate. Tyrosine 235 functions as the Proton donor in the catalytic mechanism. NAD(+)-binding positions include lysine 244 and 274-276 (VVT).

This sequence belongs to the TER reductase family. In terms of assembly, monomer.

It catalyses the reaction a 2,3-saturated acyl-[ACP] + NAD(+) = a (2E)-enoyl-[ACP] + NADH + H(+). Its pathway is lipid metabolism; fatty acid biosynthesis. Functionally, involved in the final reduction of the elongation cycle of fatty acid synthesis (FAS II). Catalyzes the reduction of a carbon-carbon double bond in an enoyl moiety that is covalently linked to an acyl carrier protein (ACP). The polypeptide is Enoyl-[acyl-carrier-protein] reductase [NADH] (Yersinia pseudotuberculosis serotype O:1b (strain IP 31758)).